Here is a 178-residue protein sequence, read N- to C-terminus: ATP-dependent protease subunit HslV (178 aa).

Residue threonine 8 is part of the active site. The Na(+) site is built by glycine 163, cysteine 166, and threonine 169.

It belongs to the peptidase T1B family. HslV subfamily. A double ring-shaped homohexamer of HslV is capped on each side by a ring-shaped HslU homohexamer. The assembly of the HslU/HslV complex is dependent on binding of ATP.

The protein resides in the cytoplasm. The catalysed reaction is ATP-dependent cleavage of peptide bonds with broad specificity.. With respect to regulation, allosterically activated by HslU binding. In terms of biological role, protease subunit of a proteasome-like degradation complex believed to be a general protein degrading machinery. The chain is ATP-dependent protease subunit HslV from Treponema denticola (strain ATCC 35405 / DSM 14222 / CIP 103919 / JCM 8153 / KCTC 15104).